Consider the following 157-residue polypeptide: Small ribosomal subunit protein uS7 (157 aa).

Belongs to the universal ribosomal protein uS7 family. In terms of assembly, part of the 30S ribosomal subunit. Contacts proteins S9 and S11.

Functionally, one of the primary rRNA binding proteins, it binds directly to 16S rRNA where it nucleates assembly of the head domain of the 30S subunit. Is located at the subunit interface close to the decoding center, probably blocks exit of the E-site tRNA. The polypeptide is Small ribosomal subunit protein uS7 (Acidovorax ebreus (strain TPSY) (Diaphorobacter sp. (strain TPSY))).